Here is a 274-residue protein sequence, read N- to C-terminus: NH(3)-dependent NAD(+) synthetase (274 aa).

46-53 (GISGGQDS) serves as a coordination point for ATP. Asp52 is a binding site for Mg(2+). Deamido-NAD(+) is bound at residue Arg140. Thr160 lines the ATP pocket. Glu165 contributes to the Mg(2+) binding site. Residues Lys173 and Asp180 each contribute to the deamido-NAD(+) site. Lys189 and Thr211 together coordinate ATP. Position 260-261 (260-261 (HK)) interacts with deamido-NAD(+).

It belongs to the NAD synthetase family. As to quaternary structure, homodimer.

It carries out the reaction deamido-NAD(+) + NH4(+) + ATP = AMP + diphosphate + NAD(+) + H(+). It participates in cofactor biosynthesis; NAD(+) biosynthesis; NAD(+) from deamido-NAD(+) (ammonia route): step 1/1. Functionally, catalyzes the ATP-dependent amidation of deamido-NAD to form NAD. Uses ammonia as a nitrogen source. The chain is NH(3)-dependent NAD(+) synthetase from Streptococcus pyogenes serotype M1.